The following is a 255-amino-acid chain: Proteasome subunit alpha type-3 (255 aa).

The residue at position 2 (Ser2) is an N-acetylserine. N6-acetyllysine occurs at positions 57, 206, and 230. Ser243 and Ser250 each carry phosphoserine.

Belongs to the peptidase T1A family. The 26S proteasome consists of a 20S proteasome core and two 19S regulatory subunits. The 20S proteasome core is a barrel-shaped complex made of 28 subunits that are arranged in four stacked rings. The two outer rings are each formed by seven alpha subunits, and the two inner rings are formed by seven beta subunits. The proteolytic activity is exerted by three beta-subunits PSMB5, PSMB6 and PSMB7. Interacts with AURKB. Interacts with CDKN1A. Interacts with MDM2 and RB1. Interacts with the C-terminus of TBXA2R isoform 2. Interacts with DNAJB2. In terms of tissue distribution, detected in liver (at protein level).

It localises to the cytoplasm. It is found in the nucleus. Component of the 20S core proteasome complex involved in the proteolytic degradation of most intracellular proteins. This complex plays numerous essential roles within the cell by associating with different regulatory particles. Associated with two 19S regulatory particles, forms the 26S proteasome and thus participates in the ATP-dependent degradation of ubiquitinated proteins. The 26S proteasome plays a key role in the maintenance of protein homeostasis by removing misfolded or damaged proteins that could impair cellular functions, and by removing proteins whose functions are no longer required. Associated with the PA200 or PA28, the 20S proteasome mediates ubiquitin-independent protein degradation. This type of proteolysis is required in several pathways including spermatogenesis (20S-PA200 complex) or generation of a subset of MHC class I-presented antigenic peptides (20S-PA28 complex). Binds to the C-terminus of CDKN1A and thereby mediates its degradation. Negatively regulates the membrane trafficking of the cell-surface thromboxane A2 receptor (TBXA2R) isoform 2. This Mus musculus (Mouse) protein is Proteasome subunit alpha type-3 (Psma3).